Here is a 338-residue protein sequence, read N- to C-terminus: Uroporphyrinogen decarboxylase (338 aa).

Substrate-binding positions include 23–27 (RQAGR), Asp-72, Tyr-146, Thr-201, and His-312.

It belongs to the uroporphyrinogen decarboxylase family. In terms of assembly, homodimer.

It localises to the cytoplasm. It carries out the reaction uroporphyrinogen III + 4 H(+) = coproporphyrinogen III + 4 CO2. It functions in the pathway porphyrin-containing compound metabolism; protoporphyrin-IX biosynthesis; coproporphyrinogen-III from 5-aminolevulinate: step 4/4. Its function is as follows. Catalyzes the decarboxylation of four acetate groups of uroporphyrinogen-III to yield coproporphyrinogen-III. The polypeptide is Uroporphyrinogen decarboxylase (Thermodesulfovibrio yellowstonii (strain ATCC 51303 / DSM 11347 / YP87)).